A 222-amino-acid polypeptide reads, in one-letter code: Phosphoribosylformylglycinamidine synthase subunit PurQ (222 aa).

The region spanning 3 to 222 (AAVLVFPGSN…ASLAAALVAA (220 aa)) is the Glutamine amidotransferase type-1 domain. Catalysis depends on cysteine 86, which acts as the Nucleophile. Active-site residues include histidine 194 and glutamate 196.

Part of the FGAM synthase complex composed of 1 PurL, 1 PurQ and 2 PurS subunits.

The protein localises to the cytoplasm. The enzyme catalyses N(2)-formyl-N(1)-(5-phospho-beta-D-ribosyl)glycinamide + L-glutamine + ATP + H2O = 2-formamido-N(1)-(5-O-phospho-beta-D-ribosyl)acetamidine + L-glutamate + ADP + phosphate + H(+). It carries out the reaction L-glutamine + H2O = L-glutamate + NH4(+). Its pathway is purine metabolism; IMP biosynthesis via de novo pathway; 5-amino-1-(5-phospho-D-ribosyl)imidazole from N(2)-formyl-N(1)-(5-phospho-D-ribosyl)glycinamide: step 1/2. Functionally, part of the phosphoribosylformylglycinamidine synthase complex involved in the purines biosynthetic pathway. Catalyzes the ATP-dependent conversion of formylglycinamide ribonucleotide (FGAR) and glutamine to yield formylglycinamidine ribonucleotide (FGAM) and glutamate. The FGAM synthase complex is composed of three subunits. PurQ produces an ammonia molecule by converting glutamine to glutamate. PurL transfers the ammonia molecule to FGAR to form FGAM in an ATP-dependent manner. PurS interacts with PurQ and PurL and is thought to assist in the transfer of the ammonia molecule from PurQ to PurL. The chain is Phosphoribosylformylglycinamidine synthase subunit PurQ from Jannaschia sp. (strain CCS1).